The primary structure comprises 432 residues: Trigger factor (432 aa).

A PPIase FKBP-type domain is found at 161-246 (EDRVTIDFTG…LKKVEERELP (86 aa)).

The protein belongs to the FKBP-type PPIase family. Tig subfamily.

It is found in the cytoplasm. It carries out the reaction [protein]-peptidylproline (omega=180) = [protein]-peptidylproline (omega=0). Its function is as follows. Involved in protein export. Acts as a chaperone by maintaining the newly synthesized protein in an open conformation. Functions as a peptidyl-prolyl cis-trans isomerase. This chain is Trigger factor, found in Citrobacter koseri (strain ATCC BAA-895 / CDC 4225-83 / SGSC4696).